A 278-amino-acid polypeptide reads, in one-letter code: HTH-type transcriptional activator RhaS (278 aa).

The HTH araC/xylS-type domain occupies 174 to 272 (NQLLAWLEDH…DWSPRDIRQG (99 aa)). DNA-binding regions (H-T-H motif) lie at residues 191-212 (EEVA…KQQT) and 239-262 (VTDI…RREF).

In terms of assembly, binds DNA as a dimer.

It is found in the cytoplasm. In terms of biological role, activates expression of the rhaBAD and rhaT operons. In Klebsiella pneumoniae (strain 342), this protein is HTH-type transcriptional activator RhaS.